Consider the following 308-residue polypeptide: Aspartate carbamoyltransferase catalytic subunit (308 aa).

Carbamoyl phosphate is bound by residues R58 and T59. K86 is a binding site for L-aspartate. R108, H136, and Q139 together coordinate carbamoyl phosphate. L-aspartate contacts are provided by R169 and R227. Carbamoyl phosphate-binding residues include G268 and P269.

The protein belongs to the aspartate/ornithine carbamoyltransferase superfamily. ATCase family. In terms of assembly, heterododecamer (2C3:3R2) of six catalytic PyrB chains organized as two trimers (C3), and six regulatory PyrI chains organized as three dimers (R2).

The catalysed reaction is carbamoyl phosphate + L-aspartate = N-carbamoyl-L-aspartate + phosphate + H(+). Its pathway is pyrimidine metabolism; UMP biosynthesis via de novo pathway; (S)-dihydroorotate from bicarbonate: step 2/3. Functionally, catalyzes the condensation of carbamoyl phosphate and aspartate to form carbamoyl aspartate and inorganic phosphate, the committed step in the de novo pyrimidine nucleotide biosynthesis pathway. The polypeptide is Aspartate carbamoyltransferase catalytic subunit (Chloroflexus aggregans (strain MD-66 / DSM 9485)).